We begin with the raw amino-acid sequence, 430 residues long: UDP-N-acetylmuramoylalanine--D-glutamate ligase (430 aa).

Gly-109–Thr-115 lines the ATP pocket.

The protein belongs to the MurCDEF family.

It localises to the cytoplasm. The catalysed reaction is UDP-N-acetyl-alpha-D-muramoyl-L-alanine + D-glutamate + ATP = UDP-N-acetyl-alpha-D-muramoyl-L-alanyl-D-glutamate + ADP + phosphate + H(+). Its pathway is cell wall biogenesis; peptidoglycan biosynthesis. In terms of biological role, cell wall formation. Catalyzes the addition of glutamate to the nucleotide precursor UDP-N-acetylmuramoyl-L-alanine (UMA). This Thermotoga maritima (strain ATCC 43589 / DSM 3109 / JCM 10099 / NBRC 100826 / MSB8) protein is UDP-N-acetylmuramoylalanine--D-glutamate ligase.